We begin with the raw amino-acid sequence, 1196 residues long: Nucleolar protein 6 (1196 aa).

2 disordered regions span residues 1–74 and 1140–1196; these read MPGK…NVKP and KREQ…KALK. Composition is skewed to basic and acidic residues over residues 22–31 and 65–74; these read HAEDHSDLEH and HRGDTKNVKP. Basic residues predominate over residues 1165–1187; the sequence is KPKKHGKRKGTGKAAPPKKKRLI.

Belongs to the NRAP family. As to quaternary structure, part of the small subunit (SSU) processome, composed of more than 70 proteins and the RNA chaperone small nucleolar RNA (snoRNA) U3.

Its subcellular location is the nucleus. It is found in the nucleolus. It localises to the chromosome. Functionally, part of the small subunit (SSU) processome, first precursor of the small eukaryotic ribosomal subunit. During the assembly of the SSU processome in the nucleolus, many ribosome biogenesis factors, an RNA chaperone and ribosomal proteins associate with the nascent pre-rRNA and work in concert to generate RNA folding, modifications, rearrangements and cleavage as well as targeted degradation of pre-ribosomal RNA by the RNA exosome. The sequence is that of Nucleolar protein 6 from Drosophila simulans (Fruit fly).